The chain runs to 149 residues: Large ribosomal subunit protein bL9 (149 aa).

The residue at position 89 (Lys-89) is an N6-acetyllysine.

The protein belongs to the bacterial ribosomal protein bL9 family.

Its function is as follows. Binds to the 23S rRNA. This Shigella boydii serotype 18 (strain CDC 3083-94 / BS512) protein is Large ribosomal subunit protein bL9.